The following is an 844-amino-acid chain: Beta-mannosidase B (844 aa).

The Proton donor role is filled by Glu-432. Asn-723 carries N-linked (GlcNAc...) asparagine glycosylation.

This sequence belongs to the glycosyl hydrolase 2 family. Beta-mannosidase B subfamily.

It catalyses the reaction Hydrolysis of terminal, non-reducing beta-D-mannose residues in beta-D-mannosides.. The protein operates within glycan metabolism; N-glycan degradation. In terms of biological role, exoglycosidase that cleaves the single beta-linked mannose residue from the non-reducing end of beta-mannosidic oligosaccharides of various complexity and length. Prefers mannobiose over mannotriose and has no activity against polymeric mannan. Is also severely restricted by galactosyl substitutions at the +1 subsite. This is Beta-mannosidase B (mndB) from Aspergillus flavus (strain ATCC 200026 / FGSC A1120 / IAM 13836 / NRRL 3357 / JCM 12722 / SRRC 167).